The chain runs to 518 residues: Cyclin-L2 (518 aa).

Cyclin-like stretches follow at residues Glu81–Lys183 and Lys196–Gln280. Positions Ala310–Arg518 are disordered. Phosphoserine is present on residues Ser328, Ser335, Ser345, Ser348, and Ser366. Positions Arg382–Ser420 are RS. Low complexity predominate over residues Ser405–Arg427. Over residues Ser438–Lys450 the composition is skewed to basic and acidic residues. Basic residues predominate over residues Lys455–Ser469. Basic and acidic residues-rich tracts occupy residues Arg470–Gly479 and Tyr487–Gly512.

The protein belongs to the cyclin family. Cyclin L subfamily. Interacts with CDK11A, CDK11B, CDK12, CDK13 and POLR2A, the hyperphosphorylated C-terminal domain (CTD) of RNA polymerase II. May form a ternary complex with CDK11B and casein kinase II (CKII). Interacts with pre-mRNA-splicing factors, including at least SRSF1, SRSF2 and SRSF7/SLU7. As to expression, widely expressed (at protein level).

It is found in the nucleus speckle. The protein localises to the nucleus. It localises to the nucleoplasm. Its function is as follows. Involved in pre-mRNA splicing. May induce cell death, possibly by acting on the transcription and RNA processing of apoptosis-related factors. The sequence is that of Cyclin-L2 (Ccnl2) from Mus musculus (Mouse).